A 311-amino-acid polypeptide reads, in one-letter code: Methionyl-tRNA formyltransferase (311 aa).

110 to 113 (SLLP) contacts (6S)-5,6,7,8-tetrahydrofolate.

Belongs to the Fmt family.

The enzyme catalyses L-methionyl-tRNA(fMet) + (6R)-10-formyltetrahydrofolate = N-formyl-L-methionyl-tRNA(fMet) + (6S)-5,6,7,8-tetrahydrofolate + H(+). Its function is as follows. Attaches a formyl group to the free amino group of methionyl-tRNA(fMet). The formyl group appears to play a dual role in the initiator identity of N-formylmethionyl-tRNA by promoting its recognition by IF2 and preventing the misappropriation of this tRNA by the elongation apparatus. The chain is Methionyl-tRNA formyltransferase from Streptococcus pneumoniae (strain P1031).